Consider the following 644-residue polypeptide: Phosphatidylinositol polyphosphate 5-phosphatase type IV (644 aa).

The interval 1–193 (MPSKAENLRP…RLPSLLPPRP (193 aa)) is disordered. A run of 8 repeats spans residues 10–13 (PSEP), 15–18 (PQPP), 28–31 (PGAP), 39–42 (PPDA), 55–58 (PATP), 69–71 (PIA), 72–74 (PRP), and 75–78 (PARP). Positions 10–242 (PSEPAPQPPE…SLGPGRPRSP (233 aa)) are 13 X 4 AA repeats of P-X-X-P. A compositionally biased stretch (basic and acidic residues) spans 78-90 (PRLERALSLDDKG). Phosphoserine is present on serine 99. A compositionally biased stretch (polar residues) spans 107-118 (NGTSPSRGSVQS). Copy 9 of the repeat occupies 121–124 (PGAP). Over residues 152 to 163 (GSPSSGGNPLSG) the composition is skewed to low complexity. 4 consecutive repeat copies span residues 169 to 172 (PNLP), 183 to 185 (PRL), 190 to 193 (PPRP), and 236 to 239 (PGRP). Phosphoserine occurs at positions 241 and 256. Position 641 is a cysteine methyl ester (cysteine 641). Cysteine 641 carries the S-farnesyl cysteine lipid modification. Residues 642-644 (SVS) constitute a propeptide, removed in mature form.

Belongs to the inositol 1,4,5-trisphosphate 5-phosphatase type IV family. As to quaternary structure, interacts (when prenylated) with PDE6D; this is important for normal location in cilia. In terms of tissue distribution, detected in brain, heart, pancreas, testis and spleen.

It is found in the cytoplasm. Its subcellular location is the cytoskeleton. The protein resides in the cilium axoneme. The protein localises to the golgi apparatus. It localises to the golgi stack membrane. It is found in the cell membrane. Its subcellular location is the cell projection. The protein resides in the ruffle. The protein localises to the nucleus. It catalyses the reaction a 1,2-diacyl-sn-glycero-3-phospho-(1D-myo-inositol-4,5-bisphosphate) + H2O = a 1,2-diacyl-sn-glycero-3-phospho-(1D-myo-inositol 4-phosphate) + phosphate. It carries out the reaction a 1,2-diacyl-sn-glycero-3-phospho-(1D-myo-inositol-3,4,5-trisphosphate) + H2O = a 1,2-diacyl-sn-glycero-3-phospho-(1D-myo-inositol-3,4-bisphosphate) + phosphate. The catalysed reaction is a 1,2-diacyl-sn-glycero-3-phospho-(1D-myo-inositol-3,5-bisphosphate) + H2O = a 1,2-diacyl-sn-glycero-3-phospho-(1D-myo-inositol-3-phosphate) + phosphate. Active in the presence of octyl-glucoside or Triton X-100, but completely inhibited by CTAB. In terms of biological role, phosphatidylinositol (PtdIns) phosphatase that specifically hydrolyzes the 5-phosphate of phosphatidylinositol-3,4,5-trisphosphate (PtdIns(3,4,5)P3), phosphatidylinositol 4,5-bisphosphate (PtdIns(4,5)P2) and phosphatidylinositol 3,5-bisphosphate (PtdIns(3,5)P2). Specific for lipid substrates, inactive towards water soluble inositol phosphates. Plays an essential role in the primary cilium by controlling ciliary growth and phosphoinositide 3-kinase (PI3K) signaling and stability. In Homo sapiens (Human), this protein is Phosphatidylinositol polyphosphate 5-phosphatase type IV (INPP5E).